The following is a 74-amino-acid chain: UPF0352 protein HAPS_0210 (74 aa).

Belongs to the UPF0352 family.

The polypeptide is UPF0352 protein HAPS_0210 (Glaesserella parasuis serovar 5 (strain SH0165) (Haemophilus parasuis)).